The following is a 182-amino-acid chain: Large ribosomal subunit protein bL17 (182 aa).

The interval 126–182 is disordered; that stretch reads ERANRVAASKAKKAEAEAAEAKAEEAEEAPEVEADTATDKAAEAEAAEAADEAAEDK. The span at 137 to 149 shows a compositional bias: basic and acidic residues; it reads KKAEAEAAEAKAE. Acidic residues-rich tracts occupy residues 150 to 161 and 170 to 182; these read EAEEAPEVEADT and EAAE…AEDK.

Belongs to the bacterial ribosomal protein bL17 family. As to quaternary structure, part of the 50S ribosomal subunit. Contacts protein L32.

This chain is Large ribosomal subunit protein bL17, found in Corynebacterium jeikeium (strain K411).